The primary structure comprises 84 residues: Large ribosomal subunit protein bL27 (84 aa).

A disordered region spans residues 1 to 25 (MAHKKAGGSSRNGRDSNGQRRGVKR).

The protein belongs to the bacterial ribosomal protein bL27 family.

This Desulfatibacillum aliphaticivorans protein is Large ribosomal subunit protein bL27.